The following is a 116-amino-acid chain: Prefoldin subunit beta (116 aa).

Belongs to the prefoldin subunit beta family. In terms of assembly, heterohexamer of two alpha and four beta subunits.

It localises to the cytoplasm. Its function is as follows. Molecular chaperone capable of stabilizing a range of proteins. Seems to fulfill an ATP-independent, HSP70-like function in archaeal de novo protein folding. This is Prefoldin subunit beta (pfdB) from Archaeoglobus fulgidus (strain ATCC 49558 / DSM 4304 / JCM 9628 / NBRC 100126 / VC-16).